A 319-amino-acid chain; its full sequence is Protein-methionine methyltransferase laeA (319 aa).

The interval 269 to 293 is disordered; the sequence is REPQSGTCSVQRENGANGDRSTLSA. Residues 270-293 are compositionally biased toward polar residues; that stretch reads EPQSGTCSVQRENGANGDRSTLSA.

Belongs to the methyltransferase superfamily. LaeA methyltransferase family. Component of the heterotrimeric velvet complex composed of laeA, veA and velB; VeA acting as a bridging protein between laeA and velB.

The protein localises to the nucleus. The catalysed reaction is L-methionyl-[protein] + S-adenosyl-L-methionine = S-methyl-L-methionyl-[protein] + S-adenosyl-L-homocysteine. Methyltransferase; component of the velvet transcription factor complex that acts as a global regulator for secondary metabolite gene expression. Controls the expression of the chaetoglobosin A biosynthesis cluster via the cheR transcription factor and the subsequent production of chaetoglobosin A. Positively regulates the expression of smtA and negatively regulates the expression of velB. LaeA also regulates pigmentation and spores production. The protein is Protein-methionine methyltransferase laeA of Chaetomium globosum (strain ATCC 6205 / CBS 148.51 / DSM 1962 / NBRC 6347 / NRRL 1970) (Soil fungus).